The chain runs to 792 residues: Lon protease (792 aa).

Residues 16–211 (DAVVVVPVSN…KVSAFLAQRL (196 aa)) enclose the Lon N-terminal domain. ATP is bound at residue 361 to 368 (GPPGVGKT). The 182-residue stretch at 597–778 (TSVPGVATGL…EDAIEAGLDP (182 aa)) folds into the Lon proteolytic domain. Active-site residues include Ser684 and Lys727.

This sequence belongs to the peptidase S16 family. As to quaternary structure, homohexamer. Organized in a ring with a central cavity.

Its subcellular location is the cytoplasm. The catalysed reaction is Hydrolysis of proteins in presence of ATP.. ATP-dependent serine protease that mediates the selective degradation of mutant and abnormal proteins as well as certain short-lived regulatory proteins. Required for cellular homeostasis and for survival from DNA damage and developmental changes induced by stress. Degrades polypeptides processively to yield small peptide fragments that are 5 to 10 amino acids long. Binds to DNA in a double-stranded, site-specific manner. The protein is Lon protease of Phenylobacterium zucineum (strain HLK1).